The following is a 203-amino-acid chain: Glycerol-3-phosphate acyltransferase (203 aa).

A run of 6 helical transmembrane segments spans residues 5–25 (IIYLLAYLIGAIPFGLLLAQI), 58–78 (TLAVATVILDALKGVLPILMA), 87–107 (ILWTMAVLAVFGHCFSPYLKF), 118–138 (GVLAVFLPFEIICALLAWFII), 150–170 (LGAMIVLIATSFIFHYDIPVI), and 176–196 (IFIIAFIVVYKHIPNILRLIG).

This sequence belongs to the PlsY family. As to quaternary structure, probably interacts with PlsX.

It is found in the cell inner membrane. The enzyme catalyses an acyl phosphate + sn-glycerol 3-phosphate = a 1-acyl-sn-glycero-3-phosphate + phosphate. It functions in the pathway lipid metabolism; phospholipid metabolism. In terms of biological role, catalyzes the transfer of an acyl group from acyl-phosphate (acyl-PO(4)) to glycerol-3-phosphate (G3P) to form lysophosphatidic acid (LPA). This enzyme utilizes acyl-phosphate as fatty acyl donor, but not acyl-CoA or acyl-ACP. The protein is Glycerol-3-phosphate acyltransferase of Campylobacter lari (strain RM2100 / D67 / ATCC BAA-1060).